The sequence spans 208 residues: Superoxide dismutase [Mn] 2 (208 aa).

4 residues coordinate Mn(2+): H28, H83, D165, and H169.

The protein belongs to the iron/manganese superoxide dismutase family. In terms of assembly, homodimer. Requires Mn(2+) as cofactor.

The catalysed reaction is 2 superoxide + 2 H(+) = H2O2 + O2. Its function is as follows. Destroys superoxide anion radicals which are normally produced within the cells and which are toxic to biological systems. The protein is Superoxide dismutase [Mn] 2 (sodA2) of Bacillus cereus (strain ATCC 14579 / DSM 31 / CCUG 7414 / JCM 2152 / NBRC 15305 / NCIMB 9373 / NCTC 2599 / NRRL B-3711).